The primary structure comprises 154 residues: Ribosome maturation factor RimP (154 aa).

This sequence belongs to the RimP family.

Its subcellular location is the cytoplasm. Functionally, required for maturation of 30S ribosomal subunits. In Heliobacterium modesticaldum (strain ATCC 51547 / Ice1), this protein is Ribosome maturation factor RimP.